Consider the following 299-residue polypeptide: Taste receptor type 2 member 5 (299 aa).

Residue Met1 is a topological domain, extracellular. A helical membrane pass occupies residues 2–22 (LSAGLGLLMLVAVVEFLIGLI). Over 23-45 (GNGVLVVWSFREWIRKFSWSSYN) the chain is Cytoplasmic. The helical transmembrane segment at 46–66 (LIILGLAGCRFVLQWLIILDL) threads the bilayer. The Extracellular portion of the chain corresponds to 67 to 82 (SLFPLFQSSRWLRYLS). A helical transmembrane segment spans residues 83–103 (IFWVLVSQASLWFATFLSVFY). The Cytoplasmic segment spans residues 104–127 (CKKITTFDHPAYLWLKQRAYNLSL). Residues 128 to 148 (WCLLGYFIINLLLTVQIGLMF) form a helical membrane-spanning segment. Over 149–175 (YHPPQGNSSIRYPFESWQYLYAFRLNS) the chain is Extracellular. Asn155 carries N-linked (GlcNAc...) asparagine glycosylation. A helical transmembrane segment spans residues 176 to 196 (GSYLPLMVFLVSSGMLIVSLY). Topologically, residues 197–223 (THHKKMKVHSAGRRDVRAKAHITALKS) are cytoplasmic. A helical membrane pass occupies residues 224-244 (LGCFLLLHLVYIMASPFSIAS). The Extracellular segment spans residues 245-253 (KTYPPDLTS). The chain crosses the membrane as a helical span at residues 254–274 (VFIWETLMAAYPSLHSLILIM). At 275–299 (GIPRVKQTCQKIXWKTVCARRCWGP) the chain is on the cytoplasmic side.

The protein belongs to the G-protein coupled receptor T2R family.

It localises to the membrane. Functionally, receptor that may play a role in the perception of bitterness and is gustducin-linked. May play a role in sensing the chemical composition of the gastrointestinal content. The activity of this receptor may stimulate alpha gustducin, mediate PLC-beta-2 activation and lead to the gating of TRPM5. The sequence is that of Taste receptor type 2 member 5 (TAS2R5) from Pan troglodytes (Chimpanzee).